Consider the following 196-residue polypeptide: DnaA initiator-associating protein DiaA (196 aa).

The 163-residue stretch at 34–196 folds into the SIS domain; that stretch reads VVQSLLNGNK…DNTLFPHQEV (163 aa).

This sequence belongs to the SIS family. DiaA subfamily. In terms of assembly, homotetramer; dimer of dimers.

Required for the timely initiation of chromosomal replication via direct interactions with the DnaA initiator protein. The chain is DnaA initiator-associating protein DiaA from Erwinia tasmaniensis (strain DSM 17950 / CFBP 7177 / CIP 109463 / NCPPB 4357 / Et1/99).